A 279-amino-acid polypeptide reads, in one-letter code: Pantothenate synthetase (279 aa).

26 to 33 (MGNLHEGH) lines the ATP pocket. Histidine 33 serves as the catalytic Proton donor. Glutamine 57 provides a ligand contact to (R)-pantoate. Beta-alanine is bound at residue glutamine 57. An ATP-binding site is contributed by 144–147 (GKKD). Position 150 (glutamine 150) interacts with (R)-pantoate. Residues valine 173 and 181–184 (LSSR) each bind ATP.

It belongs to the pantothenate synthetase family. As to quaternary structure, homodimer.

It is found in the cytoplasm. The catalysed reaction is (R)-pantoate + beta-alanine + ATP = (R)-pantothenate + AMP + diphosphate + H(+). It functions in the pathway cofactor biosynthesis; (R)-pantothenate biosynthesis; (R)-pantothenate from (R)-pantoate and beta-alanine: step 1/1. In terms of biological role, catalyzes the condensation of pantoate with beta-alanine in an ATP-dependent reaction via a pantoyl-adenylate intermediate. This is Pantothenate synthetase from Burkholderia thailandensis (strain ATCC 700388 / DSM 13276 / CCUG 48851 / CIP 106301 / E264).